The chain runs to 570 residues: Urease subunit alpha (570 aa).

Residues 131–570 (GGMDSHIHFI…LPMAQRYFLF (440 aa)) form the Urease domain. Residues H136, H138, and K219 each coordinate Ni(2+). K219 bears the N6-carboxylysine mark. H221 is a substrate binding site. Positions 248 and 274 each coordinate Ni(2+). The Proton donor role is filled by H322. D362 is a Ni(2+) binding site.

It belongs to the metallo-dependent hydrolases superfamily. Urease alpha subunit family. In terms of assembly, heterotrimer of UreA (gamma), UreB (beta) and UreC (alpha) subunits. Three heterotrimers associate to form the active enzyme. Requires Ni cation as cofactor. Carboxylation allows a single lysine to coordinate two nickel ions.

The protein localises to the cytoplasm. It catalyses the reaction urea + 2 H2O + H(+) = hydrogencarbonate + 2 NH4(+). Its pathway is nitrogen metabolism; urea degradation; CO(2) and NH(3) from urea (urease route): step 1/1. The chain is Urease subunit alpha from Rhizobium johnstonii (strain DSM 114642 / LMG 32736 / 3841) (Rhizobium leguminosarum bv. viciae).